The following is a 238-amino-acid chain: Probable transcriptional regulatory protein VPA0011 (238 aa).

The protein belongs to the TACO1 family.

The protein resides in the cytoplasm. The chain is Probable transcriptional regulatory protein VPA0011 from Vibrio parahaemolyticus serotype O3:K6 (strain RIMD 2210633).